The sequence spans 961 residues: Copper-exporting P-type ATPase (961 aa).

HMA domains follow at residues 3 to 64 (QTTL…YQAT) and 69 to 130 (PDVE…YHAT). 4 residues coordinate Cu(+): C14, C17, C80, and C83. Disordered regions lie at residues 131 to 153 (QQGI…PESL) and 178 to 201 (VLPT…TASA). Residues 142–151 (LTHSAQSQPE) show a composition bias toward polar residues. The HMA 3 domain maps to 226-289 (ESVQLLLTGM…AVKNAGYGAE (64 aa)). Cu(+)-binding residues include C237 and C240. Transmembrane regions (helical) follow at residues 316–336 (AALG…GGSM), 345–365 (PWLI…GHFY), 381–401 (TLVA…NIWP), 565–585 (AVFV…WYFF), and 592–612 (VYTL…ALGL). The 4-aspartylphosphate intermediate role is filled by D650. Mg(2+) contacts are provided by D847 and D851. The next 3 membrane-spanning stretches (helical) occupy residues 860-880 (VGIA…ITLM), 906-926 (LGAF…LYPF), and 928-948 (GTLL…ITVV).

Belongs to the cation transport ATPase (P-type) (TC 3.A.3) family. Type IB subfamily.

It is found in the cell membrane. The enzyme catalyses Cu(+)(in) + ATP + H2O = Cu(+)(out) + ADP + phosphate + H(+). In terms of biological role, involved in copper export. In Yersinia pestis, this protein is Copper-exporting P-type ATPase (copA).